The sequence spans 24 residues: Transaldolase (24 aa).

The protein belongs to the transaldolase family.

The protein localises to the cytoplasm. It carries out the reaction D-sedoheptulose 7-phosphate + D-glyceraldehyde 3-phosphate = D-erythrose 4-phosphate + beta-D-fructose 6-phosphate. The protein operates within carbohydrate degradation; pentose phosphate pathway; D-glyceraldehyde 3-phosphate and beta-D-fructose 6-phosphate from D-ribose 5-phosphate and D-xylulose 5-phosphate (non-oxidative stage): step 2/3. Functionally, transaldolase is important for the balance of metabolites in the pentose-phosphate pathway. The chain is Transaldolase from Capsicum annuum var. annuum (Red pepper).